A 71-amino-acid polypeptide reads, in one-letter code: Small ribosomal subunit protein bS21 (71 aa).

Residues lysine 48–lysine 59 show a composition bias toward basic residues. The disordered stretch occupies residues lysine 48–tyrosine 71. Over residues valine 60–tyrosine 71 the composition is skewed to basic and acidic residues.

The protein belongs to the bacterial ribosomal protein bS21 family.

The protein is Small ribosomal subunit protein bS21 of Azotobacter vinelandii (strain DJ / ATCC BAA-1303).